We begin with the raw amino-acid sequence, 277 residues long: MAVRKSNPLTPARRGMSFSDFAEITRATPHKSLLSKLSKTGGRNNHGRITARHIGGGHKRRYRLVDFRRSDKDGVKAKVAHIEYDPNRTARIALLHFLDGAKRYILAPSGLKQGDVVESGSSADIRPGNSLCIRDIPVGTILHAVELRPGQGAKLARSAGSSVRLSAKDGDFAILKLPSGEIRMVSLSCRATIGEVGNGQRLNVSLGKAGRSRWCGVRPSVRGVAMNPVDHPHGGGEGKTSGGRHPVSPWGRPEGKTRRANKPSDRFIIRRKSRKRR.

The disordered stretch occupies residues A225 to R277. Over residues P253 to I268 the composition is skewed to basic and acidic residues.

This sequence belongs to the universal ribosomal protein uL2 family. In terms of assembly, part of the 50S ribosomal subunit. Forms a bridge to the 30S subunit in the 70S ribosome.

In terms of biological role, one of the primary rRNA binding proteins. Required for association of the 30S and 50S subunits to form the 70S ribosome, for tRNA binding and peptide bond formation. It has been suggested to have peptidyltransferase activity; this is somewhat controversial. Makes several contacts with the 16S rRNA in the 70S ribosome. This Tropheryma whipplei (strain TW08/27) (Whipple's bacillus) protein is Large ribosomal subunit protein uL2.